The primary structure comprises 448 residues: Fibulin-5 (448 aa).

Residues 1–23 (MPGIKRILTVTILALCLPSPGNA) form the signal peptide. The 41-residue stretch at 42–82 (DIDECRTIPEACRGDMMCVNQNGRYLCIPRTNPVYRGPYSN) folds into the EGF-like 1; calcium-binding domain. 17 disulfides stabilise this stretch: Cys-46-Cys-59, Cys-53-Cys-68, Cys-131-Cys-144, Cys-138-Cys-153, Cys-155-Cys-166, Cys-172-Cys-181, Cys-177-Cys-190, Cys-192-Cys-205, Cys-211-Cys-221, Cys-217-Cys-230, Cys-232-Cys-245, Cys-251-Cys-262, Cys-258-Cys-271, Cys-273-Cys-286, Cys-292-Cys-305, Cys-299-Cys-314, and Cys-320-Cys-332. The Cell attachment site motif lies at 54 to 56 (RGD). The EGF-like 2; calcium-binding domain occupies 127–167 (DVDECATDSHQCNPTQICINTEGGYTCSCTDGYWLLEGQCL). Positions 168–206 (DIDECRYGYCQQLCANVPGSYSCTCNPGFTLNEDGRSCQ) constitute an EGF-like 3; calcium-binding domain. The EGF-like 4; calcium-binding domain occupies 207-246 (DVNECATENPCVQTCVNTYGSFICRCDPGYELEEDGVHCS). The tract at residues 245–448 (CSDMDECSFS…LRIYVSQYPF (204 aa)) is interaction with LOXL1. The region spanning 247–287 (DMDECSFSEFLCQHECVNQPGTYFCSCPPGYILLDDNRSCQ) is the EGF-like 5; calcium-binding domain. N-linked (GlcNAc...) asparagine glycans are attached at residues Asn-283 and Asn-296. Residues 288 to 333 (DINECEHRNHTCNLQQTCYNLQGGFKCIDPIRCEEPYLRISDNRCM) form the EGF-like 6; calcium-binding domain.

This sequence belongs to the fibulin family. Homodimer. Monomer, homodimerizes in presence of Ca(2+). Interacts with ELN. Interacts (via N-terminus) with the integrins ITGAV/ITGB3, ITGAV/ITGB5 and ITGA9/ITGB1. Interacts with FBN1 (via N-terminal domain). Forms a ternary complex with ELN and FBN1. Interacts with EFEMP2 with moderate affinity. Interacts with LOXL1. In terms of processing, N-glycosylated.

Its subcellular location is the secreted. The protein resides in the extracellular space. The protein localises to the extracellular matrix. Functionally, essential for elastic fiber formation, is involved in the assembly of continuous elastin (ELN) polymer and promotes the interaction of microfibrils and ELN. Stabilizes and organizes elastic fibers in the skin, lung and vasculature. Promotes adhesion of endothelial cells through interaction of integrins and the RGD motif. Vascular ligand for integrin receptors which may play a role in vascular development and remodeling. May act as an adapter that mediates the interaction between FBN1 and ELN. In Pongo abelii (Sumatran orangutan), this protein is Fibulin-5 (FBLN5).